The primary structure comprises 1687 residues: MSSSQNLGGATRCGRVIGPSLDKIIKNAAWRKHTFLVSACKSVLDKLEALSDSPDPSSPLFGLTTSDADAVLQPLLLSLDTGYAKVIEPALDCSFKLFSLSLLRGEVCSSSPDSLLYKLIHAICKVCGIGEESIELAVLRVLLAAVRSPRILIRGDCLLHLVRTCYNVYLGGFNGTNQICAKSVLAQIMLIVFTRSEANSMDASLKTVNVNDLLAITDKNVNEGNSVHICQGFINDVITAGEAAPPPDFALVQPPEEGASSTEDEGTGSKIREDGFLLFKNLCKLSMKFSSQENTDDQILVRGKTLSLELLKVIIDNGGPIWLSDERFLNAIKQLLCLSLLKNSALSVMSIFQLQCAIFTTLLRKYRSGMKSEVGIFFPMLVLRVLENVLQPSFVQKMTVLSLLENICHDPNLIIDIFVNFDCDVESPNIFERIVNGLLKTALGPPPGSSTILSPVQDITFRHESVKCLVSIIKAMGTWMDQQLSVGDSLLPKSLENEAPANNHSNSNEEDGTTIDHDFHPDLNPESSDAATLEQRRAYKIERQKGVTLFNRKPSKGIEFLISSKKVGNSPDEVVSFLRNTTGLNATMIGDYLGEREDFPMKVMHAYVDSFDFKEMNFGEAIRFFLRGFRLPGEAQKIDRIMEKFAERFCKCNPNSFSSADTAYVLAYSVIMLNTDAHNIMVKEKMTKADFIRNNRGIDDGKDLPEEYLGALYDQVVINEIKMSSDSSAPESRQSNGLNKLLGLDGILNLVYWTQTEEKAVGANGLLIKDIQEKFRSKSGKSESAYHVVTDVAILRFMVEVSWGPMLAAFSVTLDQSDDRLAAVECLRGFRYAVHVTAVMGMQTQRDAFVTSMAKFTNLHCAGDMKQKNVDAVKAIISIAIEDGNHLQDAWEHILTCLSRIEHLQLLGEGAPSDASYFASTETEEKKALGFPNLKKKGALQNPVMMAVVRGGSYDSSTIGPNMPGLVKQDQINNFIANLNLLDQIGSFQLNNVYAHSQRLKTEAIVAFVKALCKVSMSELQSPTDPRVFSLTKLVEIAHYNMNRIRLVWSRIWSILSDFFVSVGLSENLSVAIFVMDSLRQLSMKFLEREELANYNFQNEFLRPFVIVMQKSSSAEIRELIVRCISQMVLSRVSNVKSGWKSVFKVFTTAAADERKNIVLLAFETMEKIVREYFSYITETEATTFTDCVRCLITFTNSTFTSDVSLNAIAFLRFCALKLADGGLVWNEKGRSSSPSTPVTDDHSPSTQNFMDADENISYWVPLLTGLSKLTSDSRSAIRKSSLEVLFNILKDHGHIFSRTFWIGVFSSVIYPIFNSVWGENDLLSKDEHSSFPSTFSSHPSEVSWDAETSAMAAQYLVDLFVSFFTVIRSQLSSVVSLLAGLIRSPAQGPTVAGVGALLRLADELGDRFSENEWKEIFLAVNEAASLTLSSFMKTLRTMDDIPDEDTLSDQDFSNEDDIDEDSLQTMSYVVARTKSHITVQLQVVQVVTDLYRIHQQSLLASHVTVILEILSSISSHAHQLNSDLILQKKVRRACSILELSEPPMLHFENDTFQNYLDILQAIVTNNPGVSLELNVESQLMTVCMQILKMYLKCTLFQGDELEETRQPKNWILPMGAASKEEAAARSPLVVAVLKALRELKRDSFKRYAPNFFPLLVELVRSEHSSSQVPQVLSTVFHTCMGAMMDE.

Residues 494–529 are disordered; it reads SLENEAPANNHSNSNEEDGTTIDHDFHPDLNPESSD. A compositionally biased stretch (basic and acidic residues) spans 514 to 523; it reads TIDHDFHPDL. The 188-residue stretch at 532 to 719 folds into the SEC7 domain; the sequence is TLEQRRAYKI…GALYDQVVIN (188 aa). The active site involves Glu634. Residues 1229–1248 form a disordered region; the sequence is KGRSSSPSTPVTDDHSPSTQ. Residues 1232–1248 are compositionally biased toward polar residues; it reads SSSPSTPVTDDHSPSTQ.

As to quaternary structure, homodimer.

The protein resides in the cytoplasm. Its subcellular location is the cytosol. It is found in the membrane. Its activity is regulated as follows. Inhibited by brefeldin A. Activates the ARF proteins by exchanging bound GDP for free GTP. Plays a role in vesicular protein sorting. The polypeptide is Brefeldin A-inhibited guanine nucleotide-exchange protein 1 (BIG1) (Arabidopsis thaliana (Mouse-ear cress)).